We begin with the raw amino-acid sequence, 1140 residues long: Eukaryotic translation initiation factor 3 subunit A (1140 aa).

In terms of domain architecture, PCI spans 319-502 (LQRMAAHVLL…HCIYFGTDLT (184 aa)). Composition is skewed to basic and acidic residues over residues 590 to 624 (NNAREEEEARRQEEESRKAKLAEQKRLEQEQEERE), 826 to 903 (RMAQ…RPEG), 925 to 965 (DRAD…KDNE), 1000 to 1019 (SRDDKWRRGGDRERDRDFRN), 1026 to 1053 (RGGDREDDRDRGGFRRNDGPRRNEEQQR), and 1061 to 1087 (DAPRQSDNRDNRRPAGGDRRDRDRDVR). Disordered stretches follow at residues 590-632 (NNAR…QNEI) and 826-1140 (RMAQ…VKRR). Residues 1091–1101 (PKEGGGGGGGN) are compositionally biased toward gly residues. Positions 1108–1130 (PRDEKPTTKQRDQPQDKENKAGD) are enriched in basic and acidic residues.

The protein belongs to the eIF-3 subunit A family. Component of the eukaryotic translation initiation factor 3 (eIF-3) complex. The eIF-3 complex interacts with pix.

The protein resides in the cytoplasm. Functionally, RNA-binding component of the eukaryotic translation initiation factor 3 (eIF-3) complex, which is involved in protein synthesis of a specialized repertoire of mRNAs and, together with other initiation factors, stimulates binding of mRNA and methionyl-tRNAi to the 40S ribosome. The eIF-3 complex specifically targets and initiates translation of a subset of mRNAs involved in cell proliferation. The polypeptide is Eukaryotic translation initiation factor 3 subunit A (Drosophila willistoni (Fruit fly)).